Reading from the N-terminus, the 671-residue chain is tRNA(Met) cytidine acetyltransferase TmcA (671 aa).

ATP contacts are provided by residues Gln180, 202-211 (GRGKSALAGQ), and Arg319. Residues 356 to 531 (QTLWQSDPET…SGCYTAMALL (176 aa)) enclose the N-acetyltransferase domain. Acetyl-CoA is bound by residues 461 to 463 (IAV), 468 to 474 (QREGTGR), Glu499, and Arg506.

Belongs to the RNA cytidine acetyltransferase family. TmcA subfamily.

The protein localises to the cytoplasm. The enzyme catalyses cytidine(34) in elongator tRNA(Met) + acetyl-CoA + ATP + H2O = N(4)-acetylcytidine(34) in elongator tRNA(Met) + ADP + phosphate + CoA + H(+). The catalysed reaction is 2-hydroxyisobutanoyl-CoA + L-lysyl-[protein] = N(6)-(2-hydroxyisobutanoyl)-L-lysyl-[protein] + CoA + H(+). With respect to regulation, ATP/GTP hydrolysis is stimulated by the addition of acetyl-CoA and tRNA(Met). Binding of acetyl-CoA to TmcA activates both ATPase and tRNA-binding activities. ATP promotes the 2-hydroxyisobutyryltransferase activity. Catalyzes the formation of N(4)-acetylcytidine (ac(4)C) at the wobble position of tRNA(Met), by using acetyl-CoA as an acetyl donor and ATP (or GTP). It recognizes the wobble base of tRNA(Met), thus distinguishing between tRNA(Met) and the structurally similar tRNA(Ile2). Could use an RNA helicase motor driven by ATP hydrolysis to deliver the wobble base of tRNA(Met) to the acetyltransferase domain of TmcA. In terms of biological role, also functions as a lysine 2-hydroxyisobutyryltransferase to regulate transcription. Can specifically catalyze the 2-hydroxyisobutyrylation (Khib) of the DNA-binding protein H-NS. Hydroxyisobutyrylation of H-NS decreases its DNA-binding activity, promotes the expression of acid-resistance genes and enhances bacterial survival under extreme acid stress. In Escherichia coli (strain K12), this protein is tRNA(Met) cytidine acetyltransferase TmcA.